We begin with the raw amino-acid sequence, 177 residues long: N5-carboxyaminoimidazole ribonucleotide mutase (177 aa).

Ser18, Asp21, and Arg48 together coordinate substrate.

This sequence belongs to the AIR carboxylase family. Class I subfamily.

The catalysed reaction is 5-carboxyamino-1-(5-phospho-D-ribosyl)imidazole + H(+) = 5-amino-1-(5-phospho-D-ribosyl)imidazole-4-carboxylate. It functions in the pathway purine metabolism; IMP biosynthesis via de novo pathway; 5-amino-1-(5-phospho-D-ribosyl)imidazole-4-carboxylate from 5-amino-1-(5-phospho-D-ribosyl)imidazole (N5-CAIR route): step 2/2. Its function is as follows. Catalyzes the conversion of N5-carboxyaminoimidazole ribonucleotide (N5-CAIR) to 4-carboxy-5-aminoimidazole ribonucleotide (CAIR). In Pyrococcus horikoshii (strain ATCC 700860 / DSM 12428 / JCM 9974 / NBRC 100139 / OT-3), this protein is N5-carboxyaminoimidazole ribonucleotide mutase.